A 253-amino-acid polypeptide reads, in one-letter code: CD151 antigen (253 aa).

Residues 1–18 (MGEFNEKKTTCGTVCLKY) are Cytoplasmic-facing. S-palmitoyl cysteine attachment occurs at residues Cys11 and Cys15. Residues 19–39 (LLFTYNCCFWLAGLAVMAVGI) traverse the membrane as a helical segment. The Extracellular segment spans residues 40-57 (WTLALKSDYISLLASGTY). Residues 58 to 78 (LATAYILVVAGAVVMVTGVLG) traverse the membrane as a helical segment. At 79–91 (CCATFKERRNLLR) the chain is on the cytoplasmic side. The chain crosses the membrane as a helical span at residues 92 to 112 (LYFILLLIIFLLEIIAGVLAY). At 113–221 (VYYQQLNTEL…LETFIQEHLR (109 aa)) the chain is on the extracellular side. N-linked (GlcNAc...) asparagine glycosylation is present at Asn159. The chain crosses the membrane as a helical span at residues 222–242 (VIGAVGTGIACVQVFGMIFTC). 2 S-palmitoyl cysteine lipidation sites follow: Cys242 and Cys243. Topologically, residues 243–253 (CLYRSLKLEHY) are cytoplasmic.

The protein belongs to the tetraspanin (TM4SF) family. As to quaternary structure, interacts with integrins ITGA3:ITGB1, ITGA5:ITGB1, ITGA3:ITGB1 and ITGA6:ITGB4 and with CD9 and CD181. Interacts (via the second extracellular domain) with integrin ITGAV:ITGB3. Interacts with ITGA3; this interaction modulates ITGA3 glycosylation pattern. Interacts with F11R. Interacts with RAC1 and CDC42; these interactions mediate physical association of RAC1 and CDC42 with integrin adhesion receptor complexes. Palmitoylated. Palmitoylation by ZDHHC2 regulates CD151 expression, association with other tetraspanin family proteins and function in cell adhesion. Post-translationally, ubiquitinated by RNF128 on lysine residues present in the tetraspanin amino terminus via 'Lys-48'-linked ubiquitin leading to proteasomal degradation.

It is found in the cell membrane. Structural component of specialized membrane microdomains known as tetraspanin-enriched microdomains (TERMs), which act as platforms for receptor clustering and signaling. Plays a role in various cellular and molecular mechanism through its association with both integrin and non-integrin proteins. These interactions facilitate critical cellular functions, including cell-to-cell communication, wound healing, platelet aggregation, trafficking, cell motility, and angiogenesis. Via interaction with JAM-A/F11R and integrin ITGA3:ITGB1, promotes the recruitment of signaling molecules such as RAC1, CDC42 and RhoGTPases to facilitate the polarization of epithelial cells and the reorganization of the actin cytoskeleton, which are critical steps in cell migration process. Regulates the glycosylation pattern of ITGA3:ITGB1 thereby modulating its activity. Plays an essential role in the maintenance of central laminin-binding integrin ITGA6:ITGB4-containing adhesion complexes. Essential for the proper assembly of the glomerular and tubular basement membranes in kidney. Contributes to T-cell activation by modulating integrin signaling leading to activation of downstream targets PTK2 and MAPK1/MAPK3. The chain is CD151 antigen (CD151) from Chlorocebus aethiops (Green monkey).